The following is a 113-amino-acid chain: Flagellar hook-basal body complex protein FliE (113 aa).

The protein belongs to the FliE family.

The protein resides in the bacterial flagellum basal body. The chain is Flagellar hook-basal body complex protein FliE from Rhizobium leguminosarum bv. trifolii (strain WSM2304).